The primary structure comprises 241 residues: MRKSVIAGNWKMHMTCAETKNYLEEFIPLIKDLPNDRKIVIAPPFTAISTFSSYSNFDYLDIASQNIHWEDQGAFTAEISPKMLIEHNVKYAIVGHSEPRKYFSESDEQINKRAVFAQSSGLTPIVCVGETLEQRERGEANRVITRQVEQGLENTDPSNLIIAYEPIWAIGTGKTCEASDANKICALIRELIGFDDVIIQYGGSVKPNNIDEIMSMSDINGVLVGGSSLDPISFSRIANYE.

Substrate is bound at residue 9–11; the sequence is NWK. The Electrophile role is filled by His96. Glu165 acts as the Proton acceptor in catalysis. Residues Gly171, Ser204, and 225–226 contribute to the substrate site; that span reads GG.

This sequence belongs to the triosephosphate isomerase family. As to quaternary structure, homodimer.

Its subcellular location is the cytoplasm. It catalyses the reaction D-glyceraldehyde 3-phosphate = dihydroxyacetone phosphate. It participates in carbohydrate biosynthesis; gluconeogenesis. Its pathway is carbohydrate degradation; glycolysis; D-glyceraldehyde 3-phosphate from glycerone phosphate: step 1/1. Involved in the gluconeogenesis. Catalyzes stereospecifically the conversion of dihydroxyacetone phosphate (DHAP) to D-glyceraldehyde-3-phosphate (G3P). This Prochlorococcus marinus (strain MIT 9515) protein is Triosephosphate isomerase.